The primary structure comprises 551 residues: Transcription factor 7-like 1-B (551 aa).

The span at 1 to 11 (MPQLNGGGGDE) shows a compositional bias: gly residues. Disordered stretches follow at residues 1 to 76 (MPQL…DLES), 298 to 326 (QEPN…KPHI), and 392 to 525 (GWSA…PPSP). Basic and acidic residues predominate over residues 19–32 (ISFKDEGEQEDKIS). Low complexity predominate over residues 46–61 (SSLVSESENNSSSSDS). Basic and acidic residues predominate over residues 63–76 (QTERRPQPRADLES). The HMG box DNA-binding region spans 326-394 (IKKPLNAFML…LHSQLYPGWS (69 aa)). The segment covering 449-468 (SPATPSAALASPAAPAATHS) has biased composition (low complexity). The segment covering 469-478 (EQAQPLSLTT) has biased composition (polar residues). A compositionally biased stretch (low complexity) spans 493–505 (SSSSSSSSSSSGL).

The protein belongs to the TCF/LEF family. In terms of assembly, interacts with ctnnb1.

The protein resides in the nucleus. Participates in the Wnt signaling pathway. Probably binds to DNA and acts as a repressor in the absence of ctnnb1, and possibly as an activator in its presence. Regulates anterior-posterior patterning in the neuroectoderm by repressing posterior neural fates. Also required for hindbrain morphogenesis. In Danio rerio (Zebrafish), this protein is Transcription factor 7-like 1-B (tcf7l1b).